Consider the following 118-residue polypeptide: Large ribosomal subunit protein bL21c (118 aa).

The protein belongs to the bacterial ribosomal protein bL21 family. As to quaternary structure, part of the 50S ribosomal subunit.

The protein localises to the plastid. It localises to the chloroplast. This protein binds to 23S rRNA. This chain is Large ribosomal subunit protein bL21c, found in Psilotum nudum (Whisk fern).